A 235-amino-acid chain; its full sequence is MNTTPDTPTPRALRELTPLEARILGVLVEKQHTVPDTYPLSLNALTAGCNQKTARAPVMNVTDDEVTTALDALKHLSLVFEGSSSRVPRFEHNLNRVLGIPSQAIALLTVLMLRGPQTAAELRLNSARLHGFADISSVEAFLDELATREPPLVVRLPRAPGARENRWMHLLCGDVNVGEFAGADGGGAEAVAPSEFEALKAEQKRLADEVARLNALVRRMASELGIDADAPGDAN.

The protein belongs to the UPF0502 family.

The polypeptide is UPF0502 protein Bmul_3231/BMULJ_05293 (Burkholderia multivorans (strain ATCC 17616 / 249)).